The primary structure comprises 363 residues: 3-dehydroquinate synthase (363 aa).

NAD(+)-binding positions include 134–135 (TT), Lys-147, Lys-156, and 174–177 (TLKT). Residues Glu-189, His-254, and His-271 each contribute to the Zn(2+) site.

It belongs to the sugar phosphate cyclases superfamily. Dehydroquinate synthase family. It depends on Co(2+) as a cofactor. The cofactor is Zn(2+). NAD(+) serves as cofactor.

The protein localises to the cytoplasm. The enzyme catalyses 7-phospho-2-dehydro-3-deoxy-D-arabino-heptonate = 3-dehydroquinate + phosphate. It functions in the pathway metabolic intermediate biosynthesis; chorismate biosynthesis; chorismate from D-erythrose 4-phosphate and phosphoenolpyruvate: step 2/7. In terms of biological role, catalyzes the conversion of 3-deoxy-D-arabino-heptulosonate 7-phosphate (DAHP) to dehydroquinate (DHQ). The polypeptide is 3-dehydroquinate synthase (Prochlorococcus marinus (strain MIT 9515)).